Consider the following 310-residue polypeptide: p-hydroxybenzoic acid efflux pump subunit AaeA (310 aa).

A helical membrane pass occupies residues 12–32 (AITLVLVILAFIAIFRAWVYY).

It belongs to the membrane fusion protein (MFP) (TC 8.A.1) family.

The protein localises to the cell inner membrane. Functionally, forms an efflux pump with AaeB. In Escherichia fergusonii (strain ATCC 35469 / DSM 13698 / CCUG 18766 / IAM 14443 / JCM 21226 / LMG 7866 / NBRC 102419 / NCTC 12128 / CDC 0568-73), this protein is p-hydroxybenzoic acid efflux pump subunit AaeA.